We begin with the raw amino-acid sequence, 341 residues long: Tyrosine recombinase XerC (341 aa).

The 92-residue stretch at 14–105 (PDAAEALERW…GVRSFFRWAD (92 aa)) folds into the Core-binding (CB) domain. In terms of domain architecture, Tyr recombinase spans 126-309 (PLPRPLAADD…DAEHLLSVYE (184 aa)). Catalysis depends on residues R169, K193, H261, R264, and H287. Catalysis depends on Y296, which acts as the O-(3'-phospho-DNA)-tyrosine intermediate.

It belongs to the 'phage' integrase family. XerC subfamily. Forms a cyclic heterotetrameric complex composed of two molecules of XerC and two molecules of XerD.

It is found in the cytoplasm. In terms of biological role, site-specific tyrosine recombinase, which acts by catalyzing the cutting and rejoining of the recombining DNA molecules. The XerC-XerD complex is essential to convert dimers of the bacterial chromosome into monomers to permit their segregation at cell division. It also contributes to the segregational stability of plasmids. In Rhodospirillum centenum (strain ATCC 51521 / SW), this protein is Tyrosine recombinase XerC.